Here is a 215-residue protein sequence, read N- to C-terminus: Leucyl/phenylalanyl-tRNA--protein transferase (215 aa).

This sequence belongs to the L/F-transferase family.

Its subcellular location is the cytoplasm. The catalysed reaction is N-terminal L-lysyl-[protein] + L-leucyl-tRNA(Leu) = N-terminal L-leucyl-L-lysyl-[protein] + tRNA(Leu) + H(+). It catalyses the reaction N-terminal L-arginyl-[protein] + L-leucyl-tRNA(Leu) = N-terminal L-leucyl-L-arginyl-[protein] + tRNA(Leu) + H(+). It carries out the reaction L-phenylalanyl-tRNA(Phe) + an N-terminal L-alpha-aminoacyl-[protein] = an N-terminal L-phenylalanyl-L-alpha-aminoacyl-[protein] + tRNA(Phe). Its function is as follows. Functions in the N-end rule pathway of protein degradation where it conjugates Leu, Phe and, less efficiently, Met from aminoacyl-tRNAs to the N-termini of proteins containing an N-terminal arginine or lysine. The polypeptide is Leucyl/phenylalanyl-tRNA--protein transferase (Campylobacter jejuni (strain RM1221)).